The following is a 189-amino-acid chain: Resolvase (189 aa).

The 139-residue stretch at 1 to 139 (MLVGYARVST…EGLKSAKARG (139 aa)) folds into the Resolvase/invertase-type recombinase catalytic domain. The active-site O-(5'-phospho-DNA)-serine intermediate is Ser9. Residues 130-151 (EGLKSAKARGRNGGRPSKRNDK) are disordered. Residues 165–184 (IVDIVKQTGLSRATVYRVLN) constitute a DNA-binding region (H-T-H motif).

It belongs to the site-specific recombinase resolvase family.

Its function is as follows. A likely role for the res protein would be to stabilize pIP404 by reducing the number of plasmid multimers resulting from homologous recombination. The chain is Resolvase (res) from Clostridium perfringens.